A 402-amino-acid chain; its full sequence is N-acetyltransferase Eis (402 aa).

The 152-residue stretch at 3-154 (VTLCSPTEDD…RFARFHADAP (152 aa)) folds into the N-acetyltransferase domain. Acetyl-CoA is bound by residues 85–87 (VAV), 93–98 (RRGLLR), and 121–122 (SE). Tyrosine 126 functions as the Proton donor in the catalytic mechanism. Catalysis depends on phenylalanine 402, which acts as the Proton acceptor; via carboxylate.

The protein belongs to the acetyltransferase Eis family. In terms of assembly, homohexamer; trimer of dimers.

The protein localises to the secreted. It localises to the host cytoplasmic vesicle. It is found in the host phagosome. Its subcellular location is the extracellular vesicle. The protein resides in the bacterial extracellular vesicle. The protein localises to the host extracellular space. The enzyme catalyses L-lysyl-[protein] + acetyl-CoA = N(6)-acetyl-L-lysyl-[protein] + CoA + H(+). Effector that is released into the host cell and affects host immune responses. Acts as an acetyltransferase that acetylates lysine residues of host proteins. The sequence is that of N-acetyltransferase Eis from Mycobacterium bovis (strain ATCC BAA-935 / AF2122/97).